A 645-amino-acid chain; its full sequence is MPRSRGGRAAPGPPPPPPPPGQAPRWSRWRVPGRLLLLLLPALCCLPGAARAAAAAAGAGNRAAVAVAVARADEAEAPFAGQNWLKSYGYLLPYDSRASALHSAKALQSAVSTMQQFYGIPVTGVLDQTTIEWMKKPRCGVPDHPHLSRRRRNKRYALTGQKWRQKHITYSIHNYTPKVGELDTRKAIRQAFDVWQKVTPLTFEEVPYHEIKSDRKEADIMIFFASGFHGDSSPFDGEGGFLAHAYFPGPGIGGDTHFDSDEPWTLGNANHDGNDLFLVAVHELGHALGLEHSSDPSAIMAPFYQYMETHNFKLPQDDLQGIQKIYGPPAEPLEPTRPLPTLPVRRIHSPSERKHERQPRPPRPPLGDRPSTPGTKPNICDGNFNTVALFRGEMFVFKDRWFWRLRNNRVQEGYPMQIEQFWKGLPARIDAAYERADGRFVFFKGDKYWVFKEVTVEPGYPHSLGELGSCLPREGIDTALRWEPVGKTYFFKGERYWRYSEERRATDPGYPKPITVWKGIPQAPQGAFISKEGYYTYFYKGRDYWKFDNQKLSVEPGYPRNILRDWMGCNQKEVERRKERRLPQDDVDIMVTINDVPGSVNAVAVVIPCILSLCILVLVYTIFQFKNKTGPQPVTYYKRPVQEWV.

The span at M1–A10 shows a compositional bias: low complexity. The disordered stretch occupies residues M1–W26. The N-terminal stretch at M1–A52 is a signal peptide. Residues P11 to Q22 are compositionally biased toward pro residues. The propeptide occupies A53 to R155. Residues A53–A602 lie on the Extracellular side of the membrane. Positions P137–H144 match the Cysteine switch motif. Zn(2+) is bound by residues C139 and H282. E283 is an active-site residue. Zn(2+) is bound by residues H286 and H292. The tract at residues Q323–C380 is disordered. Over residues P329–T341 the composition is skewed to pro residues. Basic and acidic residues predominate over residues S349–P359. Hemopexin repeat units follow at residues P377 to L425, P426 to L471, R473 to P521, and Q522 to C569. C380 and C569 form a disulfide bridge. A helical transmembrane segment spans residues V603–F623. Over Q624–V645 the chain is Cytoplasmic. A PDZ-binding motif is present at residues E643–V645.

Belongs to the peptidase M10A family. In terms of assembly, interacts (via PDZ-binding motif) with APBA3 (via PDZ domain). Interacts with GRIP1 and GRIP2. The cofactor is Zn(2+). It depends on Ca(2+) as a cofactor. In terms of processing, cleaved by a furin endopeptidase in the trans-Golgi network. In terms of tissue distribution, predominantly expressed in brain, kidney, pancreas and lung. Overexpressed in a series of brain tumors, including astrocytomas and glioblastomas.

It is found in the cell membrane. Its subcellular location is the golgi apparatus. The protein resides in the trans-Golgi network membrane. It localises to the secreted. The protein localises to the extracellular space. It is found in the extracellular matrix. Its function is as follows. Metalloprotease that mediates cleavage of N-cadherin (CDH2) and acts as a regulator of neuro-immune interactions and neural stem cell quiescence. Involved in cell-cell interactions between nociceptive neurites and mast cells, possibly by mediating cleavage of CDH2, thereby acting as a mediator of peripheral thermal nociception and inflammatory hyperalgesia. Key regulator of neural stem cells quiescence by mediating cleavage of CDH2, affecting CDH2-mediated anchorage of neural stem cells to ependymocytes in the adult subependymal zone, leading to modulate their quiescence. May play a role in axonal growth. Able to activate progelatinase A. May also be a proteoglycanase involved in degradation of proteoglycans, such as dermatan sulfate and chondroitin sulfate proteoglycans. Cleaves partially fibronectin, but not collagen type I, nor laminin. This chain is Matrix metalloproteinase-24 (MMP24), found in Homo sapiens (Human).